Consider the following 447-residue polypeptide: Exodeoxyribonuclease 7 large subunit (447 aa).

The protein belongs to the XseA family. As to quaternary structure, heterooligomer composed of large and small subunits.

It is found in the cytoplasm. The enzyme catalyses Exonucleolytic cleavage in either 5'- to 3'- or 3'- to 5'-direction to yield nucleoside 5'-phosphates.. Bidirectionally degrades single-stranded DNA into large acid-insoluble oligonucleotides, which are then degraded further into small acid-soluble oligonucleotides. The protein is Exodeoxyribonuclease 7 large subunit of Streptococcus mutans serotype c (strain ATCC 700610 / UA159).